The sequence spans 433 residues: Serine carboxypeptidase-like 11 (433 aa).

An N-terminal signal peptide occupies residues 1–21 (MELTLKLLVLLLFILNHHVGS). Intrachain disulfides connect cysteine 80–cysteine 322, cysteine 243–cysteine 257, and cysteine 281–cysteine 288. An N-linked (GlcNAc...) asparagine glycan is attached at asparagine 101. Serine 176 is an active-site residue. The N-linked (GlcNAc...) asparagine glycan is linked to asparagine 342. Residue aspartate 358 is part of the active site. N-linked (GlcNAc...) asparagine glycosylation occurs at asparagine 374. Residue histidine 411 is part of the active site.

It belongs to the peptidase S10 family. In terms of tissue distribution, ubiquitous.

It localises to the secreted. In terms of biological role, probable carboxypeptidase. The chain is Serine carboxypeptidase-like 11 (SCPL11) from Arabidopsis thaliana (Mouse-ear cress).